The following is a 333-amino-acid chain: Threonine-phosphate decarboxylase (333 aa).

N6-(pyridoxal phosphate)lysine is present on Lys-199.

It belongs to the class-I pyridoxal-phosphate-dependent aminotransferase family. As to quaternary structure, homodimer. Requires pyridoxal 5'-phosphate as cofactor.

It localises to the cytoplasm. The enzyme catalyses O-phospho-L-threonine + H(+) = (R)-1-aminopropan-2-yl phosphate + CO2. It functions in the pathway cofactor biosynthesis; adenosylcobalamin biosynthesis. Decarboxylates L-threonine-O-3-phosphate to yield (R)-1-amino-2-propanol O-2-phosphate, the precursor for the linkage between the nucleotide loop and the corrin ring in cobalamin. In Sinorhizobium sp, this protein is Threonine-phosphate decarboxylase (cobC).